A 443-amino-acid chain; its full sequence is Serine/threonine-protein kinase ISR1 (443 aa).

Residues 135–415 enclose the Protein kinase domain; that stretch reads LPSNKLVGQG…LRNDLFQDWK (281 aa). ATP is bound by residues 141 to 149 and Lys-169; that span reads VGQGSYSYV. The Proton acceptor role is filled by Asp-280.

This sequence belongs to the protein kinase superfamily. Ser/Thr protein kinase family.

The catalysed reaction is L-seryl-[protein] + ATP = O-phospho-L-seryl-[protein] + ADP + H(+). It catalyses the reaction L-threonyl-[protein] + ATP = O-phospho-L-threonyl-[protein] + ADP + H(+). Probable serine/threonine protein kinase which may function redundantly with MPK1-independent branch of the PCK1 pathway that is presumed to be required for the tolerance to high temperatures and staurosporine. The polypeptide is Serine/threonine-protein kinase ISR1 (ISR1) (Saccharomyces cerevisiae (strain ATCC 204508 / S288c) (Baker's yeast)).